Consider the following 1553-residue polypeptide: Mediator of RNA polymerase II transcription subunit 14 (1553 aa).

2 short sequence motifs (LXXLL motif) span residues 55 to 59 (LAELL) and 472 to 476 (LPALL). Ser615 carries the post-translational modification Phosphoserine. 3 disordered regions span residues 699-723 (FATQ…GTSG), 1006-1199 (ASHE…LNRP), and 1513-1553 (GVGS…GGPQ). Position 1015 is a phosphoserine (Ser1015). 2 stretches are compositionally biased toward low complexity: residues 1024 to 1039 (GGPS…GSSP) and 1065 to 1080 (PSSS…HPSA). The span at 1081–1090 (GAGGGSGPQG) shows a compositional bias: gly residues. The segment covering 1099 to 1108 (PPAPHMPHPS) has biased composition (pro residues). The segment covering 1131–1155 (GPNTLYMQSHQDSPFTAMSPANNNW) has biased composition (polar residues). Over residues 1159–1169 (PSMPRPSPRPG) the composition is skewed to pro residues. Over residues 1177-1193 (TGGGAGVAGGTDRGGSR) the composition is skewed to gly residues. The span at 1515–1534 (GSSPNPMMPMQQLPQQVGPQ) shows a compositional bias: low complexity.

Belongs to the Mediator complex subunit 14 family. As to quaternary structure, component of the Mediator complex, which may include CDK8, MED4, MED6, MED11, MED14, MED17, MED18, MED20, MED21, MED22, MED27, MED28, MED30 and MED31.

The protein localises to the nucleus. Its function is as follows. Component of the Mediator complex, a coactivator involved in the regulated transcription of nearly all RNA polymerase II-dependent genes. Mediator functions as a bridge to convey information from gene-specific regulatory proteins to the basal RNA polymerase II transcription machinery. Mediator is recruited to promoters by direct interactions with regulatory proteins and serves as a scaffold for the assembly of a functional pre-initiation complex with RNA polymerase II and the general transcription factors. Required for activated transcription of the MtnA, MtnB and MtnD genes. This is Mediator of RNA polymerase II transcription subunit 14 (MED14) from Drosophila melanogaster (Fruit fly).